Reading from the N-terminus, the 409-residue chain is Argininosuccinate synthase (409 aa).

ATP contacts are provided by residues Ala11–Ser19 and Ala38. The L-citrulline site is built by Tyr91 and Ser96. Gly121 serves as a coordination point for ATP. Residues Thr123, Asn127, and Asp128 each contribute to the L-aspartate site. Asn127 is an L-citrulline binding site. Residues Arg131, Ser182, Ser191, Glu267, and Tyr279 each coordinate L-citrulline.

The protein belongs to the argininosuccinate synthase family. Type 1 subfamily. As to quaternary structure, homotetramer.

It is found in the cytoplasm. It catalyses the reaction L-citrulline + L-aspartate + ATP = 2-(N(omega)-L-arginino)succinate + AMP + diphosphate + H(+). It participates in amino-acid biosynthesis; L-arginine biosynthesis; L-arginine from L-ornithine and carbamoyl phosphate: step 2/3. This chain is Argininosuccinate synthase, found in Nitrobacter hamburgensis (strain DSM 10229 / NCIMB 13809 / X14).